Reading from the N-terminus, the 422-residue chain is MDFLEIVGQVPLKGEVEISGAKNSALPILAATLLSHQEVKIKSLPQVVDIKAMALLLQNLGAELEWLNPHTLQLSAKSLHHTEATYDLVRKMRASILVLGPLLARFKECLVSLPGGCAIGARPVDLHLKAMQQLGAEIKIEQGYIHAKAPKGLKGNDILFDKISVTGTENALMAASLAKGITRIINAAKEPEIAQLCAFLQSGGVEIEGVDSSELKIRGVESDALNLKDIQIIPDRIEAGTCLCVGAITNSQLKINHIIPNHIQAITDKLIEIGFPLDIQENSIEIYPAKKRQAFEITTKEYPGFPTDMQAQFMALATQCLGTSIIEETLFENRFMHASELQRLGANISLKTNVATISGSTELTGSDVMATDLRASSALVLAALVAKGVSRVHRIYHLDRGYERLEDKVNALGAKVLRLKEK.

Phosphoenolpyruvate is bound at residue 22-23; it reads KN. Arginine 93 is a UDP-N-acetyl-alpha-D-glucosamine binding site. Cysteine 117 acts as the Proton donor in catalysis. A 2-(S-cysteinyl)pyruvic acid O-phosphothioketal modification is found at cysteine 117. UDP-N-acetyl-alpha-D-glucosamine contacts are provided by residues 122 to 126, aspartate 308, and leucine 330; that span reads RPVDL.

It belongs to the EPSP synthase family. MurA subfamily.

The protein localises to the cytoplasm. The enzyme catalyses phosphoenolpyruvate + UDP-N-acetyl-alpha-D-glucosamine = UDP-N-acetyl-3-O-(1-carboxyvinyl)-alpha-D-glucosamine + phosphate. It functions in the pathway cell wall biogenesis; peptidoglycan biosynthesis. In terms of biological role, cell wall formation. Adds enolpyruvyl to UDP-N-acetylglucosamine. This chain is UDP-N-acetylglucosamine 1-carboxyvinyltransferase, found in Helicobacter pylori (strain J99 / ATCC 700824) (Campylobacter pylori J99).